The following is a 271-amino-acid chain: Aminoglycoside 3'-phosphotransferase (271 aa).

The active-site Proton acceptor is the Asp-198.

Belongs to the aminoglycoside phosphotransferase family.

The enzyme catalyses kanamycin A + ATP = kanamycin 3'-phosphate + ADP + H(+). Its function is as follows. Resistance to kanamycin and structurally-related aminoglycosides, including amikacin. This Salmonella typhimurium protein is Aminoglycoside 3'-phosphotransferase.